The primary structure comprises 631 residues: FAST kinase domain-containing protein 4 (631 aa).

The transit peptide at 1-107 (MAAHLVKRCT…NQAAMVLIRL (107 aa)) directs the protein to the mitochondrion. The residue at position 553 (S553) is a Phosphoserine. Residues 561 to 619 (LAFLRWEFPNFNSRSKDLLGRFVLARRHIVAAGFLIVDVPFYEWLELKSEWQKGAYLKD) enclose the RAP domain.

The protein belongs to the FAST kinase family. As to expression, ubiquitously expressed. Expression detected in spleen, thymus, testis, ovary, colon, heart, smooth muscle, kidney, brain, lung, liver and white adipose tissue with highest expression in smooth muscle.

The protein localises to the mitochondrion matrix. Functionally, plays a role in processing of mitochondrial RNA precursors and in stabilization of a subset of mature mitochondrial RNA species, such as MT-CO1, MT-CO2, MT-CYB, MT-CO3, MT-ND3, MT-ND5 and MT-ATP8/6. May play a role in cell cycle progression. This chain is FAST kinase domain-containing protein 4, found in Homo sapiens (Human).